The sequence spans 134 residues: Profilin-1 (134 aa).

Residues C13 and C118 are joined by a disulfide bond. The Involved in PIP2 interaction motif lies at 84–100 (AVIRGKKGSGGITIKKT). Phosphothreonine is present on T114.

It belongs to the profilin family. As to quaternary structure, occurs in many kinds of cells as a complex with monomeric actin in a 1:1 ratio. Phosphorylated by MAP kinases.

It localises to the cytoplasm. It is found in the cytoskeleton. Its function is as follows. Binds to actin and affects the structure of the cytoskeleton. At high concentrations, profilin prevents the polymerization of actin, whereas it enhances it at low concentrations. By binding to PIP2, it inhibits the formation of IP3 and DG. The protein is Profilin-1 (PRO1) of Olea europaea (Common olive).